The chain runs to 156 residues: Transcription antitermination protein NusB (156 aa).

The protein belongs to the NusB family.

Involved in transcription antitermination. Required for transcription of ribosomal RNA (rRNA) genes. Binds specifically to the boxA antiterminator sequence of the ribosomal RNA (rrn) operons. The protein is Transcription antitermination protein NusB of Clostridium kluyveri (strain ATCC 8527 / DSM 555 / NBRC 12016 / NCIMB 10680 / K1).